A 173-amino-acid polypeptide reads, in one-letter code: MGIKQYSQEELKEMALVEIAHELFEEHKKPVPFQELLNEIASLLGVKKEELGDRIAQFYTDLNIDGRFLALSDQTWGLRSWYPYDQLDEETQPTVKAKKKKAKKAVEEDLDLDEFEEIDEDDLDLDEVEEELDLEADDFDEEDLDEDDDDLEIEEDIIDEDDEDYDDEEEEIK.

In terms of domain architecture, HTH HARE-type spans 14 to 81; sequence MALVEIAHEL…SDQTWGLRSW (68 aa). A disordered region spans residues 110–173; the sequence is LDLDEFEEID…DYDDEEEEIK (64 aa).

It belongs to the RpoE family. As to quaternary structure, RNAP is composed of a core of 2 alpha, a beta and a beta' subunit. The core is associated with a delta subunit, and at least one of epsilon or omega. When a sigma factor is associated with the core the holoenzyme is formed, which can initiate transcription.

Its function is as follows. Participates in both the initiation and recycling phases of transcription. In the presence of the delta subunit, RNAP displays an increased specificity of transcription, a decreased affinity for nucleic acids, and an increased efficiency of RNA synthesis because of enhanced recycling. May function in sigma factor switching. It displaces RNA bound to RNA polymerase in a binary complex. This chain is DNA-directed RNA polymerase subunit delta, found in Bacillus subtilis (strain 168).